We begin with the raw amino-acid sequence, 480 residues long: DnaJ homolog subfamily A member 3, mitochondrial (480 aa).

Omega-N-methylarginine; by CARM1 is present on R58. The J domain maps to 93-158; the sequence is DYYQILGVPR…VKRKQYDAYG (66 aa). The residue at position 134 (K134) is an N6-acetyllysine. The CR-type zinc finger occupies 223-301; sequence GVNKEFTVNI…CRGAGQAKQK (79 aa). C236 contributes to the Zn(2+) binding site. CXXCXGXG motif repeat units lie at residues 236 to 243, 253 to 260, 275 to 282, and 289 to 296; these read CERCDGKG, CHYCGGSG, CRRCGGRG, and CVVCRGAG. R238 bears the Omega-N-methylarginine; by CARM1 mark. C239, C253, C256, C275, C278, C289, and C292 together coordinate Zn(2+). Residue R293 is modified to Omega-N-methylarginine; by CARM1. Phosphoserine is present on S398. Positions 437–468 are disordered; it reads TVNGVTHTSTGGRTMDSSAGSKDRREAGEDNE. A compositionally biased stretch (polar residues) spans 439 to 456; the sequence is NGVTHTSTGGRTMDSSAG.

Interacts with JAK2, HSPA9B and IFN-gammaR2 chain. Interacts with Ras GTPase-activating protein 1 (RASA1). Isoform 2 interacts with MUSK (via the cytoplasmic domain). In terms of processing, tyrosine phosphorylated.

The protein localises to the mitochondrion matrix. It is found in the cytoplasm. The protein resides in the cytosol. It localises to the postsynaptic cell membrane. In terms of biological role, modulates apoptotic signal transduction or effector structures within the mitochondrial matrix. Affect cytochrome C release from the mitochondria and caspase 3 activation, but not caspase 8 activation. Isoform 1 increases apoptosis triggered by both TNF and the DNA-damaging agent mytomycin C; in sharp contrast, isoform 2 suppresses apoptosis. Can modulate IFN-gamma-mediated transcriptional activity. Isoform 2 may play a role in neuromuscular junction development as an effector of the MUSK signaling pathway. The polypeptide is DnaJ homolog subfamily A member 3, mitochondrial (Dnaja3) (Mus musculus (Mouse)).